Reading from the N-terminus, the 181-residue chain is Oligoribonuclease (181 aa).

One can recognise an Exonuclease domain in the interval 8-171 (LIWIDLEMTG…DDIRESVAEL (164 aa)). The active site involves Tyr-129.

It belongs to the oligoribonuclease family. As to quaternary structure, homodimer.

The protein resides in the cytoplasm. 3'-to-5' exoribonuclease specific for small oligoribonucleotides. The protein is Oligoribonuclease of Escherichia coli O139:H28 (strain E24377A / ETEC).